The following is a 349-amino-acid chain: Adenine deaminase (349 aa).

H24, H26, and H204 together coordinate Zn(2+). E207 (proton donor) is an active-site residue. D285 contributes to the Zn(2+) binding site. D286 serves as a coordination point for substrate.

Belongs to the metallo-dependent hydrolases superfamily. Adenosine and AMP deaminases family. Adenine deaminase type 2 subfamily. Zn(2+) is required as a cofactor.

It catalyses the reaction adenine + H2O + H(+) = hypoxanthine + NH4(+). Catalyzes the hydrolytic deamination of adenine to hypoxanthine. Plays an important role in the purine salvage pathway and in nitrogen catabolism. The sequence is that of Adenine deaminase from Trichlorobacter lovleyi (strain ATCC BAA-1151 / DSM 17278 / SZ) (Geobacter lovleyi).